A 320-amino-acid chain; its full sequence is Ferrochelatase (320 aa).

Fe cation contacts are provided by H194 and E275.

The protein belongs to the ferrochelatase family.

It localises to the cytoplasm. It catalyses the reaction heme b + 2 H(+) = protoporphyrin IX + Fe(2+). Its pathway is porphyrin-containing compound metabolism; protoheme biosynthesis; protoheme from protoporphyrin-IX: step 1/1. In terms of biological role, catalyzes the ferrous insertion into protoporphyrin IX. The protein is Ferrochelatase of Xylella fastidiosa (strain M23).